We begin with the raw amino-acid sequence, 268 residues long: Tryptophan synthase alpha chain (268 aa).

Residues glutamate 49 and aspartate 60 each act as proton acceptor in the active site.

The protein belongs to the TrpA family. As to quaternary structure, tetramer of two alpha and two beta chains.

It carries out the reaction (1S,2R)-1-C-(indol-3-yl)glycerol 3-phosphate + L-serine = D-glyceraldehyde 3-phosphate + L-tryptophan + H2O. Its pathway is amino-acid biosynthesis; L-tryptophan biosynthesis; L-tryptophan from chorismate: step 5/5. In terms of biological role, the alpha subunit is responsible for the aldol cleavage of indoleglycerol phosphate to indole and glyceraldehyde 3-phosphate. The sequence is that of Tryptophan synthase alpha chain from Haemophilus influenzae (strain PittEE).